The primary structure comprises 278 residues: Rhomboid protease GlpG (278 aa).

Transmembrane regions (helical) follow at residues 95–115 (GPLT…MQIV), 143–163 (AFLH…WYLA), 170–190 (LGTG…GWGQ), 192–212 (LFSG…MGYV), 224–241 (ISLP…LVAG), and 245–267 (ILGL…LMAF). The Nucleophile role is filled by S202. Residue H255 is part of the active site.

The protein belongs to the peptidase S54 family.

It is found in the cell inner membrane. It carries out the reaction Cleaves type-1 transmembrane domains using a catalytic dyad composed of serine and histidine that are contributed by different transmembrane domains.. Its function is as follows. Rhomboid-type serine protease that catalyzes intramembrane proteolysis. The chain is Rhomboid protease GlpG from Yersinia enterocolitica serotype O:8 / biotype 1B (strain NCTC 13174 / 8081).